The chain runs to 330 residues: Phenylalanine--tRNA ligase alpha subunit (330 aa).

E246 lines the Mg(2+) pocket.

Belongs to the class-II aminoacyl-tRNA synthetase family. Phe-tRNA synthetase alpha subunit type 1 subfamily. As to quaternary structure, tetramer of two alpha and two beta subunits. It depends on Mg(2+) as a cofactor.

The protein resides in the cytoplasm. It carries out the reaction tRNA(Phe) + L-phenylalanine + ATP = L-phenylalanyl-tRNA(Phe) + AMP + diphosphate + H(+). This is Phenylalanine--tRNA ligase alpha subunit from Wolinella succinogenes (strain ATCC 29543 / DSM 1740 / CCUG 13145 / JCM 31913 / LMG 7466 / NCTC 11488 / FDC 602W) (Vibrio succinogenes).